The sequence spans 481 residues: Multiple inositol polyphosphate phosphatase 1 (481 aa).

The signal sequence occupies residues 1-30; it reads MLRGARSHLPASVAPAAVLAAALLSSFARC. H89 is an active-site residue. Residues N236 and N475 are each glycosylated (N-linked (GlcNAc...) asparagine). A Prevents secretion from ER motif is present at residues 478-481; the sequence is SDEL.

This sequence belongs to the histidine acid phosphatase family. MINPP1 subfamily. In terms of processing, N-glycosylated. In terms of tissue distribution, widely expressed with highest levels in kidney, intestine, thymus and liver.

The protein resides in the endoplasmic reticulum lumen. The protein localises to the secreted. Its subcellular location is the cell membrane. The enzyme catalyses 1D-myo-inositol hexakisphosphate + H2O = 1D-myo-inositol 1,2,4,5,6-pentakisphosphate + phosphate. It catalyses the reaction 1D-myo-inositol 1,2,4,5,6-pentakisphosphate + H2O = 1D-myo-inositol 1,2,5,6-tetrakisphosphate + phosphate. The catalysed reaction is 1D-myo-inositol 1,2,5,6-tetrakisphosphate + H2O = 1D-myo-inositol 1,2,6-trisphosphate + phosphate. It carries out the reaction 1D-myo-inositol 1,2,6-trisphosphate + H2O = 1D-myo-inositol 1,2-bisphosphate + phosphate. The enzyme catalyses 1D-myo-inositol 1,2-bisphosphate + H2O = 1D-myo-inositol 2-phosphate + phosphate. It catalyses the reaction 1D-myo-inositol hexakisphosphate + H2O = 1D-myo-inositol 1,2,3,5,6-pentakisphosphate + phosphate. The catalysed reaction is 1D-myo-inositol 1,2,3,5,6-pentakisphosphate + H2O = 1D-myo-inositol 1,2,3,6-tetrakisphosphate + phosphate. It carries out the reaction 1D-myo-inositol 1,2,3,6-tetrakisphosphate + H2O = 1D-myo-inositol 1,2,3-trisphosphate + phosphate. The enzyme catalyses 1D-myo-inositol 1,2,3-trisphosphate + H2O = 1D-myo-inositol 2,3-bisphosphate + phosphate. It catalyses the reaction 1D-myo-inositol 2,3-bisphosphate + H2O = 1D-myo-inositol 2-phosphate + phosphate. The catalysed reaction is 1D-myo-inositol 1,3,4,5,6-pentakisphosphate + H2O = 1D-myo-inositol 1,4,5,6-tetrakisphosphate + phosphate. It carries out the reaction 1D-myo-inositol 1,4,5,6-tetrakisphosphate + H2O = 1D-myo-inositol 1,4,5-trisphosphate + phosphate. The enzyme catalyses (2R)-2,3-bisphosphoglycerate + H2O = (2R)-2-phosphoglycerate + phosphate. Its function is as follows. Multiple inositol polyphosphate phosphatase that hydrolyzes 1D-myo-inositol 1,3,4,5,6-pentakisphosphate (InsP5[2OH]) and 1D-myo-inositol hexakisphosphate (InsP6) to a range of less phosphorylated inositol phosphates. This regulates the availability of these various small molecule second messengers and metal chelators which control many aspects of cell physiology. Has a weak in vitro activity towards 1D-myo-inositol 1,4,5-trisphosphate which is unlikely to be physiologically relevant. By regulating intracellular inositol polyphosphates pools, which act as metal chelators, it may control the availability of intracellular calcium and iron, which are important for proper neuronal development and homeostasis. May have a dual substrate specificity, and function as a 2,3-bisphosphoglycerate 3-phosphatase hydrolyzing 2,3-bisphosphoglycerate to 2-phosphoglycerate. 2,3-bisphosphoglycerate (BPG) is formed as part of the Rapoport-Luebering glycolytic bypass and is a regulator of systemic oxygen homeostasis as the major allosteric effector of hemoglobin. The sequence is that of Multiple inositol polyphosphate phosphatase 1 from Mus musculus (Mouse).